The sequence spans 450 residues: Bifunctional apoptosis regulator (450 aa).

Residues 1-24 form a disordered region; sequence MEEPQKNDLSMRGQEEDHPVRSSG. The Cytoplasmic portion of the chain corresponds to 1 to 140; the sequence is MEEPQKNDLS…PSTGRVNQQR (140 aa). The RING-type zinc finger occupies 34–74; that stretch reads CHCCYDTLVNPTTLNCGHSFCRHCLALWWMSSKKTECPECR. Residues 141–161 traverse the membrane as a helical segment; the sequence is GGGFFSGVLTALTGVAVILLV. The Extracellular portion of the chain corresponds to 162 to 331; the sequence is YHWRSRESEH…REPTWKQWRE (170 aa). The SAM domain maps to 182 to 249; it reads WTTEEVVLWL…LMELERVRAL (68 aa). Residue N232 is glycosylated (N-linked (GlcNAc...) asparagine). A helical transmembrane segment spans residues 332 to 352; it reads FLIKYSFLPYQLIAEFAWDWL. Residues 353-360 are Cytoplasmic-facing; it reads EVHYWTSR. Residues 361–381 traverse the membrane as a helical segment; it reads FLIVNAMLLSVLELFSFWRIW. At 382–404 the chain is on the extracellular side; it reads SRSELKTVPQRMWSHFWKVSTQG. A helical transmembrane segment spans residues 405–425; that stretch reads LFMAMFWPLIPQFVCNCLFYW. At 426 to 450 the chain is on the cytoplasmic side; the sequence is ALYFNPIINIDLVVKEIRRLETQVF.

Interacts with CASP8, BCL2 and BCL2L1 through SAM domain and also with HIP1, IFT57, ESRRBL1 and BCAP31. Interacts with NGFR; this interaction inhibits NF-kappa-B and JNK-related signaling pathways. In terms of processing, mediates RING-dependent self-ubiquitination leading to proteasomal degradation.

The protein localises to the endoplasmic reticulum membrane. It carries out the reaction S-ubiquitinyl-[E2 ubiquitin-conjugating enzyme]-L-cysteine + [acceptor protein]-L-lysine = [E2 ubiquitin-conjugating enzyme]-L-cysteine + N(6)-ubiquitinyl-[acceptor protein]-L-lysine.. Its function is as follows. Membrane-bound E3 ubiquitin ligase that plays a role in several processes including apoptosis regulation or reticulum endoplasmic stress. Has anti-apoptotic activity, both for apoptosis triggered via death-receptors and via mitochondrial factors. Contributes to the dynamic control of IRE1/ERN1 signaling during ER stress by inducing BAX inhibitor 1/TMBIM6 proteasomal degradation. Promotes the activation of TGF-beta signaling by mediating the 'Lys-63'-linked ubiquitination of TGFBR1 which is critical to activate the pathway. Together with NGFR, negatively regulates NF-kappa-B and JNK-related signaling pathways. Promotes the proteasome-mediated degradation of PNPLA3, a protein involveld in lipid metabolism. This Rattus norvegicus (Rat) protein is Bifunctional apoptosis regulator (Bfar).